We begin with the raw amino-acid sequence, 200 residues long: Ribonuclease HII (200 aa).

In terms of domain architecture, RNase H type-2 spans 6–200 (ESIAGVDEVG…KLFAVHGSLT (195 aa)). 3 residues coordinate a divalent metal cation: Asp12, Glu13, and Asp108.

It belongs to the RNase HII family. Mn(2+) is required as a cofactor. It depends on Mg(2+) as a cofactor.

The protein resides in the cytoplasm. It carries out the reaction Endonucleolytic cleavage to 5'-phosphomonoester.. Functionally, endonuclease that specifically degrades the RNA of RNA-DNA hybrids. The sequence is that of Ribonuclease HII from Prochlorococcus marinus (strain MIT 9303).